The following is a 247-amino-acid chain: MNCIFLSVLFIWYFFFVYVKNLSILQYDKAKVLFIQNNFEPLNNNMLRVPLNILRKRTYVVKNKKNGVPFQIFLSSENDEGLYYELNPENVEKVLNLIRPKLQIDNGDVELVDIKNNDLYIRLLGNCVTCSSNSITVSHVIKKTLKMYIRNEQNQEPNVIITNFDEINEQNIQNCLSQLKPYLDFLKVEVIIKELVNNKENINNYVCLKFLNIENSSEEINIPHNVKNEITERLKQKFPTLTVNFEN.

Belongs to the NifU family. In terms of assembly, homodimer.

The protein localises to the plastid. It is found in the apicoplast. The protein operates within cofactor biosynthesis; iron-sulfur cluster biosynthesis. Its function is as follows. Binds and transfers [4Fe-4S] iron-sulfur clusters to target proteins. This is NifU-like scaffold protein from Plasmodium falciparum (isolate 3D7).